The following is a 176-amino-acid chain: NAD(P)H-quinone oxidoreductase subunit 6, chloroplastic (176 aa).

The next 5 membrane-spanning stretches (helical) occupy residues Phe-10–Ala-30, Ile-33–Ala-53, Ala-61–Ile-81, Leu-92–Ile-112, and Phe-152–Ala-172.

It belongs to the complex I subunit 6 family. NDH is composed of at least 16 different subunits, 5 of which are encoded in the nucleus.

The protein resides in the plastid. It is found in the chloroplast thylakoid membrane. The catalysed reaction is a plastoquinone + NADH + (n+1) H(+)(in) = a plastoquinol + NAD(+) + n H(+)(out). It catalyses the reaction a plastoquinone + NADPH + (n+1) H(+)(in) = a plastoquinol + NADP(+) + n H(+)(out). Functionally, NDH shuttles electrons from NAD(P)H:plastoquinone, via FMN and iron-sulfur (Fe-S) centers, to quinones in the photosynthetic chain and possibly in a chloroplast respiratory chain. The immediate electron acceptor for the enzyme in this species is believed to be plastoquinone. Couples the redox reaction to proton translocation, and thus conserves the redox energy in a proton gradient. This Guizotia abyssinica (Niger) protein is NAD(P)H-quinone oxidoreductase subunit 6, chloroplastic (ndhG).